Consider the following 208-residue polypeptide: UPF0637 protein lp_2332 (208 aa).

This sequence belongs to the UPF0637 family.

The protein is UPF0637 protein lp_2332 of Lactiplantibacillus plantarum (strain ATCC BAA-793 / NCIMB 8826 / WCFS1) (Lactobacillus plantarum).